Consider the following 253-residue polypeptide: Triosephosphate isomerase (253 aa).

Position 9 to 11 (9 to 11 (NWK)) interacts with substrate. The active-site Electrophile is the His-95. The active-site Proton acceptor is Glu-167. Substrate is bound by residues Gly-173, Ser-213, and 234-235 (GG). Residue Ser-213 is modified to Phosphoserine.

This sequence belongs to the triosephosphate isomerase family. Homodimer.

The protein localises to the cytoplasm. The enzyme catalyses D-glyceraldehyde 3-phosphate = dihydroxyacetone phosphate. Its pathway is carbohydrate biosynthesis; gluconeogenesis. It participates in carbohydrate degradation; glycolysis; D-glyceraldehyde 3-phosphate from glycerone phosphate: step 1/1. Its function is as follows. Involved in the gluconeogenesis. Catalyzes stereospecifically the conversion of dihydroxyacetone phosphate (DHAP) to D-glyceraldehyde-3-phosphate (G3P). In Geobacillus thermodenitrificans (strain NG80-2), this protein is Triosephosphate isomerase.